Here is a 387-residue protein sequence, read N- to C-terminus: Sialic acid-binding Ig-like lectin 13 (387 aa).

The signal sequence occupies residues 1 to 15 (MLPLLLPLLWAGALA). The Ig-like V-type domain occupies 16 to 138 (LEGIFQLEVP…KDPPLSVHVT (123 aa)). Residues 16–341 (LEGIFQLEVP…QRKSGPMAEV (326 aa)) are Extracellular-facing. Disulfide bonds link cysteine 35/cysteine 168, cysteine 40/cysteine 100, and cysteine 162/cysteine 211. Residue asparagine 99 is glycosylated (N-linked (GlcNAc...) asparagine). An N-acetylneuraminate-binding site is contributed by arginine 118. One can recognise an Ig-like C2-type 1 domain in the interval 144-227 (PDILIPGALK…AGVTTTRTVR (84 aa)). Residues asparagine 229, asparagine 236, and asparagine 254 are each glycosylated (N-linked (GlcNAc...) asparagine). The 93-residue stretch at 234–326 (PQNLTLTVFQ…RNPLGSQQVS (93 aa)) folds into the Ig-like C2-type 2 domain. Cysteine 270 and cysteine 314 form a disulfide bridge. The helical transmembrane segment at 342-362 (VLVAIGEAAVKILLLFLCLII) threads the bilayer. Over 363–387 (LRVKSHRRKAAKAATGVEAAKVVKG) the chain is Cytoplasmic.

Belongs to the immunoglobulin superfamily. SIGLEC (sialic acid binding Ig-like lectin) family.

The protein resides in the membrane. Putative adhesion molecule that mediates sialic-acid dependent binding to cells. This is Sialic acid-binding Ig-like lectin 13 (SIGLEC13) from Pan troglodytes (Chimpanzee).